Consider the following 281-residue polypeptide: Probable endonuclease 4 (281 aa).

The Zn(2+) site is built by His69, His109, Glu145, Asp179, His182, His216, Asp229, His231, and Glu261.

The protein belongs to the AP endonuclease 2 family. It depends on Zn(2+) as a cofactor.

The enzyme catalyses Endonucleolytic cleavage to 5'-phosphooligonucleotide end-products.. Functionally, endonuclease IV plays a role in DNA repair. It cleaves phosphodiester bonds at apurinic or apyrimidinic (AP) sites, generating a 3'-hydroxyl group and a 5'-terminal sugar phosphate. The protein is Probable endonuclease 4 of Buchnera aphidicola subsp. Acyrthosiphon pisum (strain APS) (Acyrthosiphon pisum symbiotic bacterium).